The chain runs to 234 residues: Cysteine proteinase inhibitor 6 (234 aa).

An N-terminal signal peptide occupies residues 1–24; it reads MMRSRFLLFIVFFSLSLFISSLIA. Met2 is modified (N-acetylalanine). 2 consecutive Cystatin domains span residues 38–126 and 145–215; these read GGVG…KPAS and SGWR…FKVE. Residues 82 to 86 carry the Secondary area of contact motif; the sequence is QVVAG. Residues 133–154 form a disordered region; that stretch reads SSDLGCKQGEHESGWREVPGDD. Residues 140-154 are compositionally biased toward basic and acidic residues; the sequence is QGEHESGWREVPGDD. Ser174 bears the Phosphoserine mark.

The protein belongs to the cystatin family. Phytocystatin subfamily.

It localises to the secreted. Functionally, specific inhibitor of cysteine proteinases. Probably involved in the regulation of endogenous processes and in defense against pests and pathogens. The sequence is that of Cysteine proteinase inhibitor 6 (CYS6) from Arabidopsis thaliana (Mouse-ear cress).